Here is a 151-residue protein sequence, read N- to C-terminus: Kinetoplast-associated protein 1 (151 aa).

Residues 1 to 9 constitute a propeptide that is removed on maturation; sequence MLRVSVRSL. Residues 13–151 are disordered; the sequence is ASSKAGSKAA…KKGAAKKAHK (139 aa). 3 stretches are compositionally biased toward low complexity: residues 15 to 49, 70 to 91, and 101 to 111; these read SKAGSKAAVPAAAAAASAPLSPATSAASARAVPPV, AAAAPAKKAAAPKAAKAKTPAK, and SKPSAPKQAAG. The segment covering 112 to 151 has biased composition (basic residues); sequence KMRKAAGKAQRKIKAAARKAAPKKMAKSFGKKGAAKKAHK.

It belongs to the KAP family. In terms of assembly, associates with the kinetoplast DNA network.

The protein resides in the mitochondrion matrix. It localises to the kinetoplast. In terms of biological role, histone H1-like DNA-binding protein involved in the organization and segregation of kinetoplast DNA (kDNA). The mitochondrial DNA of kinetoplastid protozoa consists of about 5,000 minicircles and 20 to 30 maxicircles. These circular DNAs are held together by catenation into a highly organized compact disk structure referred to as a kinetoplast DNA (kDNA) network. Binds preferentially to a specific fragment of minicircle DNA and is able to compact kDNA networks through DNA charge neutralization and condensation. This chain is Kinetoplast-associated protein 1 (KAP4), found in Crithidia fasciculata.